The sequence spans 200 residues: Recombination protein RecR (200 aa).

The C4-type zinc finger occupies 57 to 72; the sequence is CQHCRTFTENSLCDIC. The region spanning 81–176 is the Toprim domain; sequence GQLCIVETPA…NITRIAHGVP (96 aa).

It belongs to the RecR family.

In terms of biological role, may play a role in DNA repair. It seems to be involved in an RecBC-independent recombinational process of DNA repair. It may act with RecF and RecO. This is Recombination protein RecR from Tolumonas auensis (strain DSM 9187 / NBRC 110442 / TA 4).